The primary structure comprises 62 residues: Large ribosomal subunit protein bL32 (62 aa).

It belongs to the bacterial ribosomal protein bL32 family.

This chain is Large ribosomal subunit protein bL32, found in Treponema denticola (strain ATCC 35405 / DSM 14222 / CIP 103919 / JCM 8153 / KCTC 15104).